The sequence spans 369 residues: Uroporphyrinogen decarboxylase (369 aa).

Substrate contacts are provided by residues 36–40, Asp-86, Tyr-162, Ser-217, and His-342; that span reads RQAGR.

The protein belongs to the uroporphyrinogen decarboxylase family. Homodimer.

It localises to the cytoplasm. The enzyme catalyses uroporphyrinogen III + 4 H(+) = coproporphyrinogen III + 4 CO2. The protein operates within porphyrin-containing compound metabolism; protoporphyrin-IX biosynthesis; coproporphyrinogen-III from 5-aminolevulinate: step 4/4. Its function is as follows. Catalyzes the decarboxylation of four acetate groups of uroporphyrinogen-III to yield coproporphyrinogen-III. The protein is Uroporphyrinogen decarboxylase of Albidiferax ferrireducens (strain ATCC BAA-621 / DSM 15236 / T118) (Rhodoferax ferrireducens).